The sequence spans 497 residues: Signal recognition particle subunit SRP54 2 (497 aa).

Residues 1 to 295 (MVLAQLGGSI…DVKPFVSRLL (295 aa)) are G-domain. GTP is bound by residues 108 to 115 (GLQGSGKT), 190 to 194 (DTSGR), and 248 to 251 (TKLD). An M-domain region spans residues 296–497 (GMGDLSGLMD…MLGGMGLGGD (202 aa)).

It belongs to the GTP-binding SRP family. SRP54 subfamily. Component of a signal recognition particle (SRP) complex that consists of a 7SL RNA molecule of 300 nucleotides and six protein subunits: SRP72, SRP68, SRP54, SRP19, SRP14 and SRP9.

The protein localises to the cytoplasm. Its subcellular location is the endoplasmic reticulum. It catalyses the reaction GTP + H2O = GDP + phosphate + H(+). Component of the signal recognition particle (SRP) complex, a ribonucleoprotein complex that mediates the cotranslational targeting of secretory and membrane proteins to the endoplasmic reticulum (ER). As part of the SRP complex, associates with the SRP receptor (SR) component SRPRA to target secretory proteins to the endoplasmic reticulum membrane. Binds to the signal sequence of presecretory proteins when they emerge from the ribosomes. Displays basal GTPase activity, and stimulates reciprocal GTPase activation of the SR subunit SRPRA. Forms a guanosine 5'-triphosphate (GTP)-dependent complex with the SR subunit SRPRA. SR compaction and GTPase mediated rearrangement of SR drive SRP-mediated cotranslational protein translocation into the ER. Requires the presence of SRP9/SRP14 and/or SRP19 to stably interact with RNA. This is Signal recognition particle subunit SRP54 2 (SRP54-2) from Hordeum vulgare (Barley).